Reading from the N-terminus, the 130-residue chain is Protein ApaG (130 aa).

One can recognise an ApaG domain in the interval 3–127; sequence RAVTRRIEVT…FSLDSPEGKR (125 aa).

The polypeptide is Protein ApaG (Rhodopseudomonas palustris (strain ATCC BAA-98 / CGA009)).